The sequence spans 227 residues: UMP-CMP kinase (227 aa).

G35–T40 lines the ATP pocket. Positions S55–V85 are NMP. Residues R61, S83–V85, G122–R125, and Q129 each bind a ribonucleoside 5'-phosphate. The segment at E159–D169 is LID. R160 contacts ATP. Positions 166 and 177 each coordinate a ribonucleoside 5'-phosphate. Position 205 (V205) interacts with ATP.

Belongs to the adenylate kinase family. UMP-CMP kinase subfamily. In terms of assembly, monomer. It depends on Mg(2+) as a cofactor.

It is found in the cytoplasm. It localises to the nucleus. The enzyme catalyses UMP + ATP = UDP + ADP. In terms of biological role, catalyzes the phosphorylation of pyrimidine nucleoside monophosphates at the expense of ATP. Plays an important role in de novo pyrimidine nucleotide biosynthesis. Has preference for UMP and CMP as phosphate acceptors, but can also use AMP and dCMP to a lesser extent. May play a role during the formation of basidiospores in the gill tissue. The polypeptide is UMP-CMP kinase (uck1) (Lentinula edodes (Shiitake mushroom)).